Here is a 745-residue protein sequence, read N- to C-terminus: VCP-like ATPase (745 aa).

Residues 231–238 (GPPGTGKT) and 508–515 (GPPGVGKT) contribute to the ATP site.

This sequence belongs to the AAA ATPase family. CDC48 subfamily. In terms of assembly, homohexamer. Forms a ring-shaped particle.

This is VCP-like ATPase (vat) from Thermoplasma acidophilum (strain ATCC 25905 / DSM 1728 / JCM 9062 / NBRC 15155 / AMRC-C165).